Here is a 476-residue protein sequence, read N- to C-terminus: Glycogen synthase (476 aa).

Lys15 is an ADP-alpha-D-glucose binding site.

This sequence belongs to the glycosyltransferase 1 family. Bacterial/plant glycogen synthase subfamily.

The catalysed reaction is [(1-&gt;4)-alpha-D-glucosyl](n) + ADP-alpha-D-glucose = [(1-&gt;4)-alpha-D-glucosyl](n+1) + ADP + H(+). The protein operates within glycan biosynthesis; glycogen biosynthesis. Synthesizes alpha-1,4-glucan chains using ADP-glucose. This is Glycogen synthase from Haemophilus influenzae (strain PittEE).